The primary structure comprises 85 residues: MSERGNRKTQVGVVVSDKMDKTAVVKVDRLVKHPVYNKYIKRSAKYKAHDMDNAAKIGDRVIIVETRPLSKDKRWKIRQIIESKA.

It belongs to the universal ribosomal protein uS17 family. As to quaternary structure, part of the 30S ribosomal subunit.

Functionally, one of the primary rRNA binding proteins, it binds specifically to the 5'-end of 16S ribosomal RNA. The polypeptide is Small ribosomal subunit protein uS17 (Geobacter sp. (strain M21)).